Consider the following 87-residue polypeptide: Small ribosomal subunit protein uS17 (87 aa).

The protein belongs to the universal ribosomal protein uS17 family. In terms of assembly, part of the 30S ribosomal subunit.

Its function is as follows. One of the primary rRNA binding proteins, it binds specifically to the 5'-end of 16S ribosomal RNA. The sequence is that of Small ribosomal subunit protein uS17 from Neisseria gonorrhoeae (strain ATCC 700825 / FA 1090).